The primary structure comprises 62 residues: Mu-conotoxin Lt5d (62 aa).

An N-terminal signal peptide occupies residues 1–22 (MRCLPVFIILLLLIPSAPSVDA). The propeptide occupies 23-48 (QPTTKDDVPLASLHDNAKRALQMFWN).

The protein belongs to the conotoxin T superfamily. In terms of processing, contains 2 disulfide bonds that can be either 'C1-C3, C2-C4' or 'C1-C4, C2-C3', since these disulfide connectivities have been observed for conotoxins with cysteine framework V (for examples, see AC P0DQQ7 and AC P81755). In terms of tissue distribution, expressed by the venom duct.

The protein localises to the secreted. Its function is as follows. Mu-conotoxins block voltage-gated sodium channels (Nav). This toxin inhibits tetrodotoxin(TTX)-sensitive sodium channels, but does not affect TTX-resistant sodium channels. Reduces the amplitude of currents without changing the activation and inactivation kinetics of currents. This Conus litteratus (Lettered cone) protein is Mu-conotoxin Lt5d.